A 199-amino-acid polypeptide reads, in one-letter code: Nucleoside triphosphate pyrophosphatase (199 aa).

The active-site Proton acceptor is the Asp76.

The protein belongs to the Maf family. A divalent metal cation is required as a cofactor.

Its subcellular location is the cytoplasm. The catalysed reaction is a ribonucleoside 5'-triphosphate + H2O = a ribonucleoside 5'-phosphate + diphosphate + H(+). It carries out the reaction a 2'-deoxyribonucleoside 5'-triphosphate + H2O = a 2'-deoxyribonucleoside 5'-phosphate + diphosphate + H(+). Nucleoside triphosphate pyrophosphatase. May have a dual role in cell division arrest and in preventing the incorporation of modified nucleotides into cellular nucleic acids. The chain is Nucleoside triphosphate pyrophosphatase from Ruegeria pomeroyi (strain ATCC 700808 / DSM 15171 / DSS-3) (Silicibacter pomeroyi).